The primary structure comprises 280 residues: Putative pyruvate, phosphate dikinase regulatory protein (280 aa).

Position 154–161 (154–161 (GVSRTSKT)) interacts with ADP.

Belongs to the pyruvate, phosphate/water dikinase regulatory protein family. PDRP subfamily.

The catalysed reaction is N(tele)-phospho-L-histidyl/L-threonyl-[pyruvate, phosphate dikinase] + ADP = N(tele)-phospho-L-histidyl/O-phospho-L-threonyl-[pyruvate, phosphate dikinase] + AMP + H(+). The enzyme catalyses N(tele)-phospho-L-histidyl/O-phospho-L-threonyl-[pyruvate, phosphate dikinase] + phosphate + H(+) = N(tele)-phospho-L-histidyl/L-threonyl-[pyruvate, phosphate dikinase] + diphosphate. Its function is as follows. Bifunctional serine/threonine kinase and phosphorylase involved in the regulation of the pyruvate, phosphate dikinase (PPDK) by catalyzing its phosphorylation/dephosphorylation. This Nitrobacter winogradskyi (strain ATCC 25391 / DSM 10237 / CIP 104748 / NCIMB 11846 / Nb-255) protein is Putative pyruvate, phosphate dikinase regulatory protein.